Reading from the N-terminus, the 130-residue chain is Sigma-w pathway protein YsdB (130 aa).

The chain crosses the membrane as a helical span at residues 2-22 (FVMVLRIILLALFAYCIYAVV).

The protein resides in the membrane. May mediate a negative feedback loop that down-regulates the expression of the sigma-W regulon following the activation of sigma-W in response to conditions of cell envelope stress. Might interact with and inhibit the activity of the protease PrsW, or could bind to the anti-sigma-W factor RsiW and thereby protect it from PrsW-mediated cleavage. The sequence is that of Sigma-w pathway protein YsdB (ysdB) from Bacillus subtilis (strain 168).